Here is a 278-residue protein sequence, read N- to C-terminus: Orotidine 5'-phosphate decarboxylase (278 aa).

Substrate-binding positions include aspartate 40, 62–64, 93–102, tyrosine 228, and arginine 246; these read KTH and DRKFIDIGNT. The Proton donor role is filled by lysine 95.

It belongs to the OMP decarboxylase family.

The enzyme catalyses orotidine 5'-phosphate + H(+) = UMP + CO2. The protein operates within pyrimidine metabolism; UMP biosynthesis via de novo pathway; UMP from orotate: step 2/2. This Passalora fulva (Tomato leaf mold) protein is Orotidine 5'-phosphate decarboxylase (PYR1).